Here is a 507-residue protein sequence, read N- to C-terminus: Decapping nuclease RAI1 (507 aa).

Residue Arg73 participates in substrate binding. A divalent metal cation is bound at residue Glu230. Positions 272 and 289 each coordinate substrate. Positions 291, 306, and 307 each coordinate a divalent metal cation. Substrate is bound by residues Lys308 and Gln340.

This sequence belongs to the DXO/Dom3Z family. Interacts with RAT1; the interaction is direct, stabilizes RAT1 protein structure and stimulates its exoribonuclease activity. The interaction also stimulates RAI1 pyrophosphohydrolase activity, probably by recruiting it to mRNA substrates. It depends on a divalent metal cation as a cofactor.

Its subcellular location is the nucleus. It catalyses the reaction a 5'-end NAD(+)-phospho-ribonucleoside in mRNA + H2O = a 5'-end phospho-ribonucleoside in mRNA + NAD(+) + H(+). It carries out the reaction a 5'-end (N(7)-methyl 5'-triphosphoguanosine)-ribonucleoside-ribonucleotide in mRNA + H2O = a (N(7)-methyl 5'-triphosphoguanosine)-nucleoside + a 5'-end phospho-ribonucleoside in mRNA + H(+). The enzyme catalyses a 5'-end triphospho-ribonucleoside in mRNA + H2O = a 5'-end phospho-ribonucleoside in mRNA + diphosphate + H(+). In terms of biological role, decapping enzyme for NAD-capped RNAs: specifically hydrolyzes the nicotinamide adenine dinucleotide (NAD) cap from a subset of RNAs by removing the entire NAD moiety from the 5'-end of an NAD-capped RNA. The NAD-cap is present at the 5'-end of some RNAs and snoRNAs. In contrast to the canonical 5'-end N7 methylguanosine (m7G) cap, the NAD cap promotes mRNA decay. Also acts as a non-canonical decapping enzyme that removes the entire cap structure of m7G capped or incompletely capped RNAs. Has decapping activity toward incomplete 5'-end m7G cap mRNAs such as unmethylated 5'-end-capped RNA (cap0), while it has no activity toward 2'-O-ribose methylated m7G cap (cap1). Also possesses RNA 5'-pyrophosphohydrolase activity by hydrolyzing the 5'-end triphosphate to release pyrophosphates. Stimulates exoribonuclease activity of Rat1, allowing it to degrade RNAs with stable secondary structure more effectively. This chain is Decapping nuclease RAI1 (RAI1), found in Mycosarcoma maydis (Corn smut fungus).